Consider the following 85-residue polypeptide: Sec-independent protein translocase protein TatA (85 aa).

A helical transmembrane segment spans residues 1-21 (MGGISIWQLLIIALIVVLLFG). The disordered stretch occupies residues 43–85 (MSSEEDKKALEDAEAAKPVQTAQTAQPTQQATEKKPESNKEQA). Positions 46 to 57 (EEDKKALEDAEA) are enriched in basic and acidic residues. Low complexity predominate over residues 58 to 73 (AKPVQTAQTAQPTQQA). The span at 74–85 (TEKKPESNKEQA) shows a compositional bias: basic and acidic residues.

This sequence belongs to the TatA/E family. As to quaternary structure, the Tat system comprises two distinct complexes: a TatABC complex, containing multiple copies of TatA, TatB and TatC subunits, and a separate TatA complex, containing only TatA subunits. Substrates initially bind to the TatABC complex, which probably triggers association of the separate TatA complex to form the active translocon.

The protein localises to the cell inner membrane. Its function is as follows. Part of the twin-arginine translocation (Tat) system that transports large folded proteins containing a characteristic twin-arginine motif in their signal peptide across membranes. TatA could form the protein-conducting channel of the Tat system. The sequence is that of Sec-independent protein translocase protein TatA from Shewanella sp. (strain MR-4).